Reading from the N-terminus, the 108-residue chain is Cell cycle protein GpsB (108 aa).

Residues 32-69 (LDNVIKDYENFNAQIEALKAENEALKKAKFQARNTVSA) adopt a coiled-coil conformation.

It belongs to the GpsB family. As to quaternary structure, forms polymers through the coiled coil domains. Interacts with PBP1, MreC and EzrA.

It is found in the cytoplasm. In terms of biological role, divisome component that associates with the complex late in its assembly, after the Z-ring is formed, and is dependent on DivIC and PBP2B for its recruitment to the divisome. Together with EzrA, is a key component of the system that regulates PBP1 localization during cell cycle progression. Its main role could be the removal of PBP1 from the cell pole after pole maturation is completed. Also contributes to the recruitment of PBP1 to the division complex. Not essential for septum formation. In Streptococcus pyogenes serotype M28 (strain MGAS6180), this protein is Cell cycle protein GpsB.